Reading from the N-terminus, the 702-residue chain is Polyribonucleotide nucleotidyltransferase (702 aa).

Aspartate 485 and aspartate 491 together coordinate Mg(2+). The 61-residue stretch at 552–612 (PRTEIICIDP…EGVKKAISII (61 aa)) folds into the KH domain. The S1 motif domain maps to 622–690 (GEIYLGKVTK…NQGRINLSRK (69 aa)).

It belongs to the polyribonucleotide nucleotidyltransferase family. Mg(2+) is required as a cofactor.

The protein localises to the cytoplasm. The catalysed reaction is RNA(n+1) + phosphate = RNA(n) + a ribonucleoside 5'-diphosphate. Its function is as follows. Involved in mRNA degradation. Catalyzes the phosphorolysis of single-stranded polyribonucleotides processively in the 3'- to 5'-direction. The protein is Polyribonucleotide nucleotidyltransferase of Clostridium botulinum (strain Langeland / NCTC 10281 / Type F).